Here is a 427-residue protein sequence, read N- to C-terminus: Flotillin-1 (427 aa).

A phosphoserine mark is found at S19, S163, and S385.

This sequence belongs to the band 7/mec-2 family. Flotillin subfamily. Heterooligomeric complex of flotillin-1 and flotillin-2 and caveolin-1 and caveolin-2. Interacts with ECPAS.

It is found in the cell membrane. Its subcellular location is the endosome. The protein localises to the membrane. It localises to the caveola. The protein resides in the melanosome. It is found in the membrane raft. Its function is as follows. May act as a scaffolding protein within caveolar membranes, functionally participating in formation of caveolae or caveolae-like vesicles. The chain is Flotillin-1 (FLOT1) from Bos taurus (Bovine).